A 422-amino-acid polypeptide reads, in one-letter code: Enolase (422 aa).

Q162 is a binding site for (2R)-2-phosphoglycerate. The active-site Proton donor is E204. Mg(2+) is bound by residues D241, E284, and D311. Residues K336, R365, S366, and K387 each coordinate (2R)-2-phosphoglycerate. The active-site Proton acceptor is K336.

It belongs to the enolase family. As to quaternary structure, component of the RNA degradosome, a multiprotein complex involved in RNA processing and mRNA degradation. It depends on Mg(2+) as a cofactor.

The protein localises to the cytoplasm. It localises to the secreted. The protein resides in the cell surface. The enzyme catalyses (2R)-2-phosphoglycerate = phosphoenolpyruvate + H2O. Its pathway is carbohydrate degradation; glycolysis; pyruvate from D-glyceraldehyde 3-phosphate: step 4/5. Functionally, catalyzes the reversible conversion of 2-phosphoglycerate (2-PG) into phosphoenolpyruvate (PEP). It is essential for the degradation of carbohydrates via glycolysis. In Legionella pneumophila (strain Corby), this protein is Enolase.